The primary structure comprises 115 residues: Parathyroid hormone (115 aa).

Positions Met1–Gly25 are cleaved as a signal peptide. A propeptide spanning residues Lys26–Arg31 is cleaved from the precursor. Residues Arg51 to Gly69 are important for receptor binding. The tract at residues Arg75–Leu98 is disordered.

This sequence belongs to the parathyroid hormone family. Interacts with PTH1R (via N-terminal extracellular domain).

The protein localises to the secreted. In terms of biological role, parathyroid hormone elevates calcium level by dissolving the salts in bone and preventing their renal excretion. Acts by binding to its receptor, PTH1R, activating G protein-coupled receptor signaling. Stimulates [1-14C]-2-deoxy-D-glucose (2DG) transport and glycogen synthesis in osteoblastic cells. This chain is Parathyroid hormone (PTH), found in Sus scrofa (Pig).